Reading from the N-terminus, the 184-residue chain is Cell number regulator 5 (184 aa).

A helical membrane pass occupies residues Met-91 to Val-111. The tract at residues Arg-162–Leu-184 is disordered.

Belongs to the cornifelin family. Expressed in roots, leaves, stalks, immature ears, endosperm and pollen.

Its subcellular location is the membrane. This chain is Cell number regulator 5 (CNR5), found in Zea mays (Maize).